The following is an 874-amino-acid chain: Probable leucine--tRNA ligase, cytoplasmic (874 aa).

Residues 36-46 carry the 'HIGH' region motif; it reads PYMNGRLHLGH. The 'KMSKS' region motif lies at 544 to 548; the sequence is KMSKS. Lysine 547 lines the ATP pocket.

It belongs to the class-I aminoacyl-tRNA synthetase family.

The protein localises to the cytoplasm. The enzyme catalyses tRNA(Leu) + L-leucine + ATP = L-leucyl-tRNA(Leu) + AMP + diphosphate. This chain is Probable leucine--tRNA ligase, cytoplasmic, found in Encephalitozoon cuniculi (strain GB-M1) (Microsporidian parasite).